We begin with the raw amino-acid sequence, 119 residues long: cAMP-responsive element-binding protein-like 2 (119 aa).

Residues 1–23 form a disordered region; it reads MDDSKIVAGKVKKPGKRGRKPAK. The segment covering 10 to 21 has biased composition (basic residues); it reads KVKKPGKRGRKP. The bZIP domain occupies 23-86; the sequence is KIDLKAKLER…LAMDQGKIPS (64 aa). The segment at 29–60 is basic motif; the sequence is KLERSRQSARECRARKKLRYQYLEELVSSKER. The interval 62 to 69 is leucine-zipper; sequence ICALREEL. Positions 95-119 are disordered; that stretch reads DEQKTPQSCSNKTTKNSKYSSSSGI. The segment covering 102-119 has biased composition (low complexity); that stretch reads SCSNKTTKNSKYSSSSGI.

It belongs to the bZIP family. ATF subfamily.

Its subcellular location is the nucleus. Probable regulator of creb1 transcriptional activity which is involved in adipose cells differentiation. May also play a regulatory role in the cell cycle. The polypeptide is cAMP-responsive element-binding protein-like 2 (crebl2) (Danio rerio (Zebrafish)).